Here is a 303-residue protein sequence, read N- to C-terminus: Monoglyceride lipase (303 aa).

T10 is subject to Phosphothreonine. Y58 bears the 3'-nitrotyrosine mark. The active-site Nucleophile is S122. Residues D239 and H269 each act as charge relay system in the active site.

It belongs to the AB hydrolase superfamily. Monoacylglycerol lipase family. In terms of assembly, homodimer. In terms of tissue distribution, detected in adipose tissue, lung, liver, kidney, brain and heart.

It is found in the cytoplasm. It localises to the cytosol. Its subcellular location is the membrane. It catalyses the reaction Hydrolyzes glycerol monoesters of long-chain fatty acids.. The enzyme catalyses a 1-acylglycerol + H2O = glycerol + a fatty acid + H(+). The catalysed reaction is a 2-acylglycerol + H2O = glycerol + a fatty acid + H(+). It carries out the reaction 1-octanoylglycerol + H2O = octanoate + glycerol + H(+). It catalyses the reaction 2-(5Z,8Z,11Z,14Z-eicosatetraenoyl)-glycerol + H2O = glycerol + (5Z,8Z,11Z,14Z)-eicosatetraenoate + H(+). The enzyme catalyses 1-decanoylglycerol + H2O = decanoate + glycerol + H(+). The catalysed reaction is 1-dodecanoylglycerol + H2O = dodecanoate + glycerol + H(+). It carries out the reaction 1-tetradecanoylglycerol + H2O = tetradecanoate + glycerol + H(+). It catalyses the reaction 2-hexadecanoylglycerol + H2O = glycerol + hexadecanoate + H(+). The enzyme catalyses 1-(9Z-octadecenoyl)-glycerol + H2O = glycerol + (9Z)-octadecenoate + H(+). The catalysed reaction is 2-(9Z-octadecenoyl)-glycerol + H2O = glycerol + (9Z)-octadecenoate + H(+). It carries out the reaction 2-(9Z,12Z-octadecadienoyl)-glycerol + H2O = (9Z,12Z)-octadecadienoate + glycerol + H(+). It catalyses the reaction 1-(5Z,8Z,11Z,14Z-eicosatetraenoyl)-glycerol + H2O = glycerol + (5Z,8Z,11Z,14Z)-eicosatetraenoate + H(+). The enzyme catalyses 1-(9Z,12Z-octadecadienoyl)-glycerol + H2O = (9Z,12Z)-octadecadienoate + glycerol + H(+). The catalysed reaction is 1-hexadecanoylglycerol + H2O = glycerol + hexadecanoate + H(+). It carries out the reaction 1-octadecanoylglycerol + H2O = octadecanoate + glycerol + H(+). It catalyses the reaction prostaglandin E2 1-glyceryl ester + H2O = prostaglandin E2 + glycerol + H(+). The enzyme catalyses prostaglandin D2-1-glycerol ester + H2O = prostaglandin D2 + glycerol + H(+). The catalysed reaction is 2-glyceryl-15-deoxy-Delta(12,14)-prostaglandin J2 + H2O = 15-deoxy-Delta(12,14)-prostaglandin J2 + glycerol + H(+). It carries out the reaction prostaglandin F2alpha 1-glyceryl ester + H2O = prostaglandin F2alpha + glycerol + H(+). It functions in the pathway glycerolipid metabolism; triacylglycerol degradation. Its function is as follows. Converts monoacylglycerides to free fatty acids and glycerol. Hydrolyzes the endocannabinoid 2-arachidonoylglycerol, and thereby contributes to the regulation of endocannabinoid signaling, nociperception and perception of pain. Regulates the levels of fatty acids that serve as signaling molecules and promote cancer cell migration, invasion and tumor growth. This is Monoglyceride lipase from Homo sapiens (Human).